The chain runs to 251 residues: Zinc import ATP-binding protein ZnuC (251 aa).

Positions Val-5–Arg-220 constitute an ABC transporter domain. An ATP-binding site is contributed by Gly-37–Ser-44.

The protein belongs to the ABC transporter superfamily. Zinc importer (TC 3.A.1.15.5) family. In terms of assembly, the complex is composed of two ATP-binding proteins (ZnuC), two transmembrane proteins (ZnuB) and a solute-binding protein (ZnuA).

The protein localises to the cell inner membrane. It carries out the reaction Zn(2+)(out) + ATP(in) + H2O(in) = Zn(2+)(in) + ADP(in) + phosphate(in) + H(+)(in). Functionally, part of the ABC transporter complex ZnuABC involved in zinc import. Responsible for energy coupling to the transport system. The polypeptide is Zinc import ATP-binding protein ZnuC (Escherichia coli O157:H7).